Here is a 299-residue protein sequence, read N- to C-terminus: 6-phosphogluconate dehydrogenase, NAD(+)-dependent, decarboxylating (299 aa).

NAD(+) contacts are provided by residues 7-12, 67-69, and Asn-95; these read GLGRMG and VPA. Substrate-binding residues include Asn-95, Ser-118, and Gly-120. The Proton acceptor role is filled by Lys-169. 172 to 173 provides a ligand contact to substrate; the sequence is HN. Residue Glu-176 is the Proton donor of the active site. 2 residues coordinate substrate: Tyr-177 and Arg-268.

This sequence belongs to the 6-phosphogluconate dehydrogenase family. In terms of assembly, homotetramer.

It carries out the reaction 6-phospho-D-gluconate + NAD(+) = D-ribulose 5-phosphate + CO2 + NADH. It participates in carbohydrate degradation; pentose phosphate pathway. Catalyzes the oxidative decarboxylation of 6-phosphogluconate to ribulose 5-phosphate and CO(2), with concomitant reduction of NAD to NADH. This Haloferax volcanii (strain ATCC 29605 / DSM 3757 / JCM 8879 / NBRC 14742 / NCIMB 2012 / VKM B-1768 / DS2) (Halobacterium volcanii) protein is 6-phosphogluconate dehydrogenase, NAD(+)-dependent, decarboxylating.